We begin with the raw amino-acid sequence, 406 residues long: Tryptophan synthase beta chain (406 aa).

Lys-99 is modified (N6-(pyridoxal phosphate)lysine).

It belongs to the TrpB family. As to quaternary structure, tetramer of two alpha and two beta chains. Pyridoxal 5'-phosphate is required as a cofactor.

The catalysed reaction is (1S,2R)-1-C-(indol-3-yl)glycerol 3-phosphate + L-serine = D-glyceraldehyde 3-phosphate + L-tryptophan + H2O. It participates in amino-acid biosynthesis; L-tryptophan biosynthesis; L-tryptophan from chorismate: step 5/5. Functionally, the beta subunit is responsible for the synthesis of L-tryptophan from indole and L-serine. This Rhizobium johnstonii (strain DSM 114642 / LMG 32736 / 3841) (Rhizobium leguminosarum bv. viciae) protein is Tryptophan synthase beta chain.